The following is a 102-amino-acid chain: Monothiol glutaredoxin-S9 (102 aa).

One can recognise a Glutaredoxin domain in the interval 1-101 (MDKVVRMSSE…PLVKPFQANL (101 aa)). Cysteine 21 contributes to the [2Fe-2S] cluster binding site.

The protein belongs to the glutaredoxin family. CC-type subfamily.

The protein resides in the cytoplasm. In terms of biological role, may only reduce GSH-thiol disulfides, but not protein disulfides. This chain is Monothiol glutaredoxin-S9 (GRXS9), found in Arabidopsis thaliana (Mouse-ear cress).